The following is a 213-amino-acid chain: Large ribosomal subunit protein uL1 (213 aa).

Belongs to the universal ribosomal protein uL1 family. In terms of assembly, part of the 50S ribosomal subunit.

Its function is as follows. Binds directly to 23S rRNA. Probably involved in E site tRNA release. Functionally, protein L1 is also a translational repressor protein, it controls the translation of its operon by binding to its mRNA. The chain is Large ribosomal subunit protein uL1 from Nanoarchaeum equitans (strain Kin4-M).